Reading from the N-terminus, the 402-residue chain is Dynactin subunit 2 (402 aa).

The segment at 1–26 (MADPKYADLPGIARNEPDVYETSDLP) is disordered. 2 coiled-coil regions span residues 101 to 132 (PQQRYQRLQHEVQELIRDVEQIQSAVKESAAE) and 357 to 402 (VHLD…KRLQ).

This sequence belongs to the dynactin subunit 2 family. In terms of assembly, subunit of dynactin, a multiprotein complex part of a tripartite complex with dynein and a adapter, such as BICDL1, BICD2 or HOOK3. The dynactin complex is built around ACTR1A/ACTB filament and consists of an actin-related filament composed of a shoulder domain, a pointed end and a barbed end. Its length is defined by its flexible shoulder domain. The soulder is composed of 2 DCTN1 subunits, 4 DCTN2 and 2 DCTN3.

The protein resides in the cytoplasm. It localises to the cytoskeleton. It is found in the microtubule organizing center. Its subcellular location is the centrosome. The protein localises to the membrane. Part of the dynactin complex that activates the molecular motor dynein for ultra-processive transport along microtubules. In the dynactin soulder domain, binds the ACTR1A filament and acts as a molecular ruler to determine the length. Modulates cytoplasmic dynein binding to an organelle, and plays a role in prometaphase chromosome alignment and spindle organization during mitosis. Involved in anchoring microtubules to centrosomes. The sequence is that of Dynactin subunit 2 (DCTN2) from Gallus gallus (Chicken).